A 389-amino-acid chain; its full sequence is Large envelope protein (389 aa).

Residue methionine 1 is modified to N-acetylmethionine. A lipid anchor (N-myristoyl glycine; by host) is attached at glycine 2. Residues 2–108 (GQNLSTSNPL…PPLRDAHPQA (107 aa)) are pre-S1. Residues 2 to 163 (GQNLSTSNPL…FSKIGDLAPN (162 aa)) form a pre-S region. At 2 to 170 (GQNLSTSNPL…APNMENITSG (169 aa)) the chain is on the virion surface; in external conformation side. Topologically, residues 2–242 (GQNLSTSNPL…PGYRWMCLRR (241 aa)) are intravirion; in internal conformation. The disordered stretch occupies residues 76–103 (TLPANPPPAATNRQSGRQPTPLSPPLRD). Polar residues predominate over residues 86 to 95 (TNRQSGRQPT). Residues 109-163 (MQWTSTTFHQALQDPRVRGLYFPAGGSSSGTVNPVPTTASPILSIFSKIGDLAPN) form a pre-S2 region. The helical transmembrane segment at 171–191 (FLGPLLVLQAGFFLLTRILTI) threads the bilayer. At 192 to 242 (PQSLDSWWTSLNFLGGTTVCLGQNSQSPTSNHSPTSCPPTCPGYRWMCLRR) the chain is on the intravirion; in external conformation side. Residues 243–263 (FIIFLFILLLCLIFLLVLLDY) form a helical membrane-spanning segment. Residues 264–337 (QGMLPVCPLI…WASARFSWLS (74 aa)) lie on the Virion surface side of the membrane. A glycan (N-linked (GlcNAc...) asparagine; by host) is linked at asparagine 309. Residues 338–358 (LLVPFVQWFAGLSPIVWLSVI) form a helical membrane-spanning segment. Topologically, residues 359–364 (WMMWYW) are intravirion. A helical transmembrane segment spans residues 365 to 387 (GPSLYSILSPFLPLLPIFFCLWA). Residues 388-389 (YI) are Virion surface-facing.

It belongs to the orthohepadnavirus major surface antigen family. In its internal form (Li-HBsAg), interacts with the capsid protein and with the isoform S. Interacts with host chaperone CANX. As to quaternary structure, associates with host chaperone CANX through its pre-S2 N glycan; this association may be essential for isoform M proper secretion. In terms of assembly, interacts with isoform L. Interacts with the antigens of satellite virus HDV (HDVAgs); this interaction is required for encapsidation of HDV genomic RNA. In terms of processing, isoform M is N-terminally acetylated by host at a ratio of 90%, and N-glycosylated by host at the pre-S2 region. Myristoylated.

The protein resides in the virion membrane. In terms of biological role, the large envelope protein exists in two topological conformations, one which is termed 'external' or Le-HBsAg and the other 'internal' or Li-HBsAg. In its external conformation the protein attaches the virus to cell receptors and thereby initiating infection. This interaction determines the species specificity and liver tropism. This attachment induces virion internalization predominantly through caveolin-mediated endocytosis. The large envelope protein also assures fusion between virion membrane and endosomal membrane. In its internal conformation the protein plays a role in virion morphogenesis and mediates the contact with the nucleocapsid like a matrix protein. Functionally, the middle envelope protein plays an important role in the budding of the virion. It is involved in the induction of budding in a nucleocapsid independent way. In this process the majority of envelope proteins bud to form subviral lipoprotein particles of 22 nm of diameter that do not contain a nucleocapsid. The sequence is that of Large envelope protein from Homo sapiens (Human).